The following is a 236-amino-acid chain: Small ribosomal subunit protein uS2c (236 aa).

The protein belongs to the universal ribosomal protein uS2 family.

It localises to the plastid. The protein localises to the chloroplast. This chain is Small ribosomal subunit protein uS2c (rps2), found in Liriodendron tulipifera (Tuliptree).